The chain runs to 262 residues: MRFGLNIDHIVTLREIRKTYEPEILEALFIAKNTHKVDLITIHLREDKRHIQNEDVLRLLEISPLPINIECSINVAITDFLCSLKNKPSKVTIVPENRNEVTTEGGLDCSLKGLGEVIRAYHNKGIEVSLFVDPLKDALHFAKEHQVKQVEFHTGVYANLHNALYSNANNQIHAISALKDKCPKELKEELHNAFLQLRRMSKEAFFMGIVVCAGHGLNYTNVKELLKIPSLRELNIGHSVVSKAVLVGLEKAILEMAQLIKR.

Residue asparagine 6 participates in 3-amino-2-oxopropyl phosphate binding. Residue 8–9 (DH) participates in 1-deoxy-D-xylulose 5-phosphate binding. Residue arginine 17 participates in 3-amino-2-oxopropyl phosphate binding. Histidine 43 functions as the Proton acceptor in the catalytic mechanism. Residues arginine 45 and histidine 50 each coordinate 1-deoxy-D-xylulose 5-phosphate. The active-site Proton acceptor is the glutamate 70. Residue threonine 102 participates in 1-deoxy-D-xylulose 5-phosphate binding. Residue histidine 215 is the Proton donor of the active site. 3-amino-2-oxopropyl phosphate contacts are provided by residues glycine 216 and 237 to 238 (GH).

This sequence belongs to the PNP synthase family. As to quaternary structure, homooctamer; tetramer of dimers.

The protein localises to the cytoplasm. It catalyses the reaction 3-amino-2-oxopropyl phosphate + 1-deoxy-D-xylulose 5-phosphate = pyridoxine 5'-phosphate + phosphate + 2 H2O + H(+). The protein operates within cofactor biosynthesis; pyridoxine 5'-phosphate biosynthesis; pyridoxine 5'-phosphate from D-erythrose 4-phosphate: step 5/5. Its function is as follows. Catalyzes the complicated ring closure reaction between the two acyclic compounds 1-deoxy-D-xylulose-5-phosphate (DXP) and 3-amino-2-oxopropyl phosphate (1-amino-acetone-3-phosphate or AAP) to form pyridoxine 5'-phosphate (PNP) and inorganic phosphate. The protein is Pyridoxine 5'-phosphate synthase of Helicobacter pylori (strain HPAG1).